Consider the following 257-residue polypeptide: 1-(5-phosphoribosyl)-5-[(5-phosphoribosylamino)methylideneamino] imidazole-4-carboxamide isomerase (257 aa).

The Proton acceptor role is filled by Asp8. Asp129 acts as the Proton donor in catalysis.

Belongs to the HisA/HisF family.

It is found in the cytoplasm. It carries out the reaction 1-(5-phospho-beta-D-ribosyl)-5-[(5-phospho-beta-D-ribosylamino)methylideneamino]imidazole-4-carboxamide = 5-[(5-phospho-1-deoxy-D-ribulos-1-ylimino)methylamino]-1-(5-phospho-beta-D-ribosyl)imidazole-4-carboxamide. The protein operates within amino-acid biosynthesis; L-histidine biosynthesis; L-histidine from 5-phospho-alpha-D-ribose 1-diphosphate: step 4/9. In Trichormus variabilis (strain ATCC 29413 / PCC 7937) (Anabaena variabilis), this protein is 1-(5-phosphoribosyl)-5-[(5-phosphoribosylamino)methylideneamino] imidazole-4-carboxamide isomerase.